We begin with the raw amino-acid sequence, 196 residues long: Protein TEX261 (196 aa).

Helical transmembrane passes span 3–23 (FMYL…TLAV), 42–62 (SRII…LYVF), 70–90 (IGVG…FPFI), 97–117 (FILS…FFAE), and 125–145 (VLAY…VSLS).

This sequence belongs to the SVP26 family.

The protein resides in the membrane. This is Protein TEX261 (TEX261) from Pongo abelii (Sumatran orangutan).